The primary structure comprises 650 residues: Acetyl-coenzyme A synthetase (650 aa).

CoA-binding positions include 191 to 194 (RGGR), Thr311, and Asn335. ATP-binding positions include 387–389 (GEP), 411–416 (DTWWQT), Asp500, and Arg515. Ser523 serves as a coordination point for CoA. Residue Arg526 participates in ATP binding. Mg(2+)-binding residues include Val537, His539, and Val542. Residue Arg584 coordinates CoA. Lys609 carries the N6-acetyllysine modification.

It belongs to the ATP-dependent AMP-binding enzyme family. Requires Mg(2+) as cofactor. Post-translationally, acetylated. Deacetylation by the SIR2-homolog deacetylase activates the enzyme.

It catalyses the reaction acetate + ATP + CoA = acetyl-CoA + AMP + diphosphate. Functionally, catalyzes the conversion of acetate into acetyl-CoA (AcCoA), an essential intermediate at the junction of anabolic and catabolic pathways. AcsA undergoes a two-step reaction. In the first half reaction, AcsA combines acetate with ATP to form acetyl-adenylate (AcAMP) intermediate. In the second half reaction, it can then transfer the acetyl group from AcAMP to the sulfhydryl group of CoA, forming the product AcCoA. The sequence is that of Acetyl-coenzyme A synthetase from Shewanella sediminis (strain HAW-EB3).